The chain runs to 306 residues: Formimidoylglutamase (306 aa).

A compositionally biased stretch (polar residues) spans 1–13 (MFQNATDWTPTST). The tract at residues 1-36 (MFQNATDWTPTSTDPRDEQFGGVVEPVPTPSDADDY) is disordered. Positions 123, 147, 149, 151, 234, and 236 each coordinate Mn(2+).

This sequence belongs to the arginase family. It depends on Mn(2+) as a cofactor.

The catalysed reaction is N-formimidoyl-L-glutamate + H2O = formamide + L-glutamate. It functions in the pathway amino-acid degradation; L-histidine degradation into L-glutamate; L-glutamate from N-formimidoyl-L-glutamate (hydrolase route): step 1/1. In terms of biological role, catalyzes the conversion of N-formimidoyl-L-glutamate to L-glutamate and formamide. The sequence is that of Formimidoylglutamase from Halobacterium salinarum (strain ATCC 29341 / DSM 671 / R1).